A 968-amino-acid polypeptide reads, in one-letter code: Alanine--tRNA ligase, cytoplasmic (968 aa).

N-acetylmethionine is present on Met-1. Residues Arg-77, His-95, Trp-176, and 214-216 each bind ATP; that span reads IWN. L-alanine-binding residues include Asn-216 and Asp-239. Gly-243 is an ATP binding site. A phosphoserine mark is found at Ser-399 and Ser-555. His-605, His-609, Cys-723, and His-727 together coordinate Zn(2+). Residues 750–763 carry the Nuclear localization signal motif; sequence RRIVAVTGAEAQKA. Lys-876 is modified (N6-acetyllysine). Lys-943 bears the N6,N6,N6-trimethyllysine; alternate mark. Lys-943 is modified (N6,N6-dimethyllysine; alternate). Residue Lys-943 is modified to N6-methyllysine; alternate.

Belongs to the class-II aminoacyl-tRNA synthetase family. As to quaternary structure, monomer. Interacts with ANKRD16; the interaction is direct. Zn(2+) serves as cofactor. Post-translationally, ISGylated. In terms of processing, methylation at 'Lys-943' by METTL21C.

The protein localises to the cytoplasm. It is found in the nucleus. The catalysed reaction is tRNA(Ala) + L-alanine + ATP = L-alanyl-tRNA(Ala) + AMP + diphosphate. It catalyses the reaction (S)-lactate + ATP + H(+) = (S)-lactoyl-AMP + diphosphate. It carries out the reaction (S)-lactoyl-AMP + L-lysyl-[protein] = N(6)-[(S)-lactoyl]-L-lysyl-[protein] + AMP + 2 H(+). The protein lactyltransferase activity is inhibited by beta-alanine. Functionally, catalyzes the attachment of alanine to tRNA(Ala) in a two-step reaction: alanine is first activated by ATP to form Ala-AMP and then transferred to the acceptor end of tRNA(Ala). Also edits incorrectly charged tRNA(Ala) via its editing domain. In presence of high levels of lactate, also acts as a protein lactyltransferase that mediates lactylation of lysine residues in target proteins, such as TEAD1, TP53/p53 and YAP1. Protein lactylation takes place in a two-step reaction: lactate is first activated by ATP to form lactate-AMP and then transferred to lysine residues of target proteins. Acts as an inhibitor of TP53/p53 activity by catalyzing lactylation of TP53/p53. Acts as a positive regulator of the Hippo pathway by mediating lactylation of TEAD1 and YAP1. This chain is Alanine--tRNA ligase, cytoplasmic, found in Mus musculus (Mouse).